The chain runs to 101 residues: Urease subunit beta (101 aa).

It belongs to the urease beta subunit family. Heterotrimer of UreA (gamma), UreB (beta) and UreC (alpha) subunits. Three heterotrimers associate to form the active enzyme.

The protein localises to the cytoplasm. It carries out the reaction urea + 2 H2O + H(+) = hydrogencarbonate + 2 NH4(+). It functions in the pathway nitrogen metabolism; urea degradation; CO(2) and NH(3) from urea (urease route): step 1/1. This Pseudomonas fluorescens (strain SBW25) protein is Urease subunit beta.